The following is a 283-amino-acid chain: Small aggregate formation protein (283 aa).

Its subcellular location is the cytoplasm. In terms of biological role, knockout of the gene for this protein causes small aggregate formation. May regulate the secretion or processing of a secreted factor that regulates aggregate size. This is Small aggregate formation protein (smlA) from Dictyostelium discoideum (Social amoeba).